Here is a 619-residue protein sequence, read N- to C-terminus: Zinc finger protein 668 (619 aa).

Met-1 carries the post-translational modification N-acetylmethionine. At Ser-10 the chain carries Phosphoserine. The C2H2-type 1 zinc finger occupies 22 to 44 (YKCLSCTKTFPNAPRAARHAATH). The interval 34-79 (APRAARHAATHGPADCSEEVAEVKPKPETEAKAEEASGEKVSGSAA) is disordered. Positions 54-71 (AEVKPKPETEAKAEEASG) are enriched in basic and acidic residues. Residues Lys-57, Lys-59, Lys-65, and Lys-80 each participate in a glycyl lysine isopeptide (Lys-Gly) (interchain with G-Cter in SUMO2) cross-link. 11 C2H2-type zinc fingers span residues 84–106 (YACP…GRSH), 112–134 (FPCP…LASH), 140–162 (FRCA…QRGH), 168–190 (YACA…RRTH), 196–218 (YSCE…ERSH), 224–246 (FLCS…QRIH), 252–274 (YRCP…ERTH), 280–302 (FLCP…QRAH), 308–330 (YHCE…RRVH), 336–358 (FKCL…ALVH), and 364–386 (FRCE…SRVH). Lys-154 participates in a covalent cross-link: Glycyl lysine isopeptide (Lys-Gly) (interchain with G-Cter in SUMO2). Phosphoserine is present on Ser-387. The segment at 392-414 (FHCNACGKSFVVSSSLRKHERTH) adopts a C2H2-type 13 zinc-finger fold. A disordered region spans residues 492-513 (REAPGPLEGAGEAGGEEADEKP). Residue Lys-512 forms a Glycyl lysine isopeptide (Lys-Gly) (interchain with G-Cter in SUMO2) linkage. C2H2-type zinc fingers lie at residues 516-538 (FVCR…ERSH), 544-566 (FPCT…SRTH), and 572-594 (YTCP…ERTH).

Belongs to the krueppel C2H2-type zinc-finger protein family.

The protein resides in the nucleus. In terms of biological role, may be involved in transcriptional regulation. May play a role in DNA repair process. This Homo sapiens (Human) protein is Zinc finger protein 668 (ZNF668).